The chain runs to 185 residues: Ribosome-recycling factor (185 aa).

This sequence belongs to the RRF family.

It localises to the cytoplasm. Functionally, responsible for the release of ribosomes from messenger RNA at the termination of protein biosynthesis. May increase the efficiency of translation by recycling ribosomes from one round of translation to another. The protein is Ribosome-recycling factor of Mycobacterium leprae (strain Br4923).